Here is a 286-residue protein sequence, read N- to C-terminus: ATP synthase gamma chain (286 aa).

This sequence belongs to the ATPase gamma chain family. F-type ATPases have 2 components, CF(1) - the catalytic core - and CF(0) - the membrane proton channel. CF(1) has five subunits: alpha(3), beta(3), gamma(1), delta(1), epsilon(1). CF(0) has three main subunits: a, b and c.

It is found in the cell inner membrane. Its function is as follows. Produces ATP from ADP in the presence of a proton gradient across the membrane. The gamma chain is believed to be important in regulating ATPase activity and the flow of protons through the CF(0) complex. The chain is ATP synthase gamma chain from Shewanella sediminis (strain HAW-EB3).